The sequence spans 309 residues: MIYLAGGCFWGVEEYFSQVDGVLDAVSGYANGRGDTTNYQLIHQTGHAETVEVAYDANRISLKELLLHFFRIIDPTSLNKQGNDRGSQYRTGIYYTDKADLAIIDEVFKEKAKDYKKKIVVEKAPLKHFIKAEDYHQDYLKKNPNGYCHIDINQATYPVIDESKYPKPSATEIKEKLSADEYRVTQKNETEKAFSNRYWDSFDAGIYVDVVTGEPLFSSKDKFESGCGWPSFSRPISPDVVRYKEDKSFNMTRTEVRSRSGNSHLGHVFTDGPKDQGGLRYCINSLSITFIPKADMEAKGYGYLLSSVE.

Residues 1-153 are peptide methionine sulfoxide reductase A; it reads MIYLAGGCFW…PNGYCHIDIN (153 aa). The active site involves Cys-8. Residues 170–293 enclose the MsrB domain; sequence ATEIKEKLSA…NSLSITFIPK (124 aa). Catalysis depends on Cys-282, which acts as the Nucleophile.

This sequence in the N-terminal section; belongs to the MsrA Met sulfoxide reductase family. In the C-terminal section; belongs to the MsrB Met sulfoxide reductase family.

The catalysed reaction is L-methionyl-[protein] + [thioredoxin]-disulfide + H2O = L-methionyl-(S)-S-oxide-[protein] + [thioredoxin]-dithiol. The enzyme catalyses [thioredoxin]-disulfide + L-methionine + H2O = L-methionine (S)-S-oxide + [thioredoxin]-dithiol. It carries out the reaction L-methionyl-[protein] + [thioredoxin]-disulfide + H2O = L-methionyl-(R)-S-oxide-[protein] + [thioredoxin]-dithiol. Its function is as follows. Has an important function as a repair enzyme for proteins that have been inactivated by oxidation. Catalyzes the reversible oxidation-reduction of methionine sulfoxide in proteins to methionine. This Streptococcus pyogenes serotype M1 protein is Peptide methionine sulfoxide reductase MsrA/MsrB (msrAB).